We begin with the raw amino-acid sequence, 459 residues long: Argininosuccinate lyase (459 aa).

This sequence belongs to the lyase 1 family. Argininosuccinate lyase subfamily.

Its subcellular location is the cytoplasm. It catalyses the reaction 2-(N(omega)-L-arginino)succinate = fumarate + L-arginine. It participates in amino-acid biosynthesis; L-arginine biosynthesis; L-arginine from L-ornithine and carbamoyl phosphate: step 3/3. In Prochlorococcus marinus (strain MIT 9215), this protein is Argininosuccinate lyase.